Consider the following 438-residue polypeptide: Enolase (438 aa).

The substrate site is built by histidine 159 and glutamate 168. The active-site Proton donor is the glutamate 211. Mg(2+)-binding residues include aspartate 246, glutamate 297, and aspartate 322. Residues glutamate 297 and aspartate 322 each contribute to the substrate site. The active-site Proton acceptor is the lysine 347. Substrate is bound by residues 374 to 377 (SHRS) and lysine 398.

It belongs to the enolase family. Homodimer. The cofactor is Mg(2+).

It localises to the cytoplasm. It catalyses the reaction (2R)-2-phosphoglycerate = phosphoenolpyruvate + H2O. The protein operates within carbohydrate degradation; glycolysis; pyruvate from D-glyceraldehyde 3-phosphate: step 4/5. In Alternaria alternata (Alternaria rot fungus), this protein is Enolase (ENO).